The chain runs to 313 residues: Protein FixB (313 aa).

255–283 serves as a coordination point for FAD; that stretch reads LYLAVGISGQIQHMVGANASQTIFAINKD.

It belongs to the ETF alpha-subunit/FixB family. Heterodimer of FixA and FixB.

The protein operates within amine and polyamine metabolism; carnitine metabolism. Required for anaerobic carnitine reduction. May bring reductant to CaiA. This chain is Protein FixB, found in Escherichia coli O1:K1 / APEC.